Here is a 450-residue protein sequence, read N- to C-terminus: Probable glycosidase CRR1 (450 aa).

The N-terminal stretch at 1 to 17 is a signal peptide; sequence MSKRIIQLILLSAFARA. The region spanning 67–347 is the GH16 domain; sequence SPESCVPVPA…WENAPDIKAH (281 aa). The active-site Nucleophile is the E225. The active-site Proton donor is E229. The disordered stretch occupies residues 428-450; sequence AQRQQHHRRSLPHVEAPPITNTM.

This sequence belongs to the glycosyl hydrolase 16 family. CRR1 subfamily.

The protein resides in the spore wall. Functionally, spore specific glycosidase involved in spore wall assembly during sporulation. May be involved in copper import. The chain is Probable glycosidase CRR1 (CRR1) from Eremothecium gossypii (strain ATCC 10895 / CBS 109.51 / FGSC 9923 / NRRL Y-1056) (Yeast).